We begin with the raw amino-acid sequence, 460 residues long: Cysteine--tRNA ligase (460 aa).

C28 contributes to the Zn(2+) binding site. Residues 30–40 (VTIYDLCHIGH) carry the 'HIGH' region motif. Zn(2+) is bound by residues C209, H234, and E238. Residues 266-270 (KMSKS) carry the 'KMSKS' region motif. K269 contributes to the ATP binding site.

It belongs to the class-I aminoacyl-tRNA synthetase family. In terms of assembly, monomer. It depends on Zn(2+) as a cofactor.

The protein resides in the cytoplasm. The catalysed reaction is tRNA(Cys) + L-cysteine + ATP = L-cysteinyl-tRNA(Cys) + AMP + diphosphate. In Vibrio vulnificus (strain CMCP6), this protein is Cysteine--tRNA ligase.